We begin with the raw amino-acid sequence, 441 residues long: Ribulose bisphosphate carboxylase (441 aa).

K160 acts as the Proton acceptor in catalysis. Position 162 (K162) interacts with substrate. Mg(2+) is bound by residues K186, D188, and E189. At K186 the chain carries N6-carboxylysine. The active-site Proton acceptor is H278. Residues R279, H311, 364-366 (SGG), and 386-389 (QVGG) each bind substrate.

This sequence belongs to the RuBisCO large chain family. Type III subfamily. In terms of assembly, homodimer. In contrast to form I RuBisCO, the form III RuBisCO is composed solely of large subunits. Mg(2+) is required as a cofactor.

It carries out the reaction 2 (2R)-3-phosphoglycerate + 2 H(+) = D-ribulose 1,5-bisphosphate + CO2 + H2O. The catalysed reaction is D-ribulose 1,5-bisphosphate + O2 = 2-phosphoglycolate + (2R)-3-phosphoglycerate + 2 H(+). Its activity is regulated as follows. Reversibly inhibited by O(2). Its function is as follows. Catalyzes the addition of molecular CO(2) and H(2)O to ribulose 1,5-bisphosphate (RuBP), generating two molecules of 3-phosphoglycerate (3-PGA). Functions in an archaeal AMP degradation pathway, together with AMP phosphorylase and R15P isomerase. The chain is Ribulose bisphosphate carboxylase from Archaeoglobus fulgidus (strain ATCC 49558 / DSM 4304 / JCM 9628 / NBRC 100126 / VC-16).